Consider the following 456-residue polypeptide: Bifunctional protein GlmU (456 aa).

Residues 1–230 (MDKRFAVVLA…FQETLGVNDR (230 aa)) form a pyrophosphorylase region. UDP-N-acetyl-alpha-D-glucosamine-binding positions include 9 to 12 (LAAG), Lys23, Gln73, and 78 to 79 (GT). Asp103 provides a ligand contact to Mg(2+). Positions 140, 155, 170, and 228 each coordinate UDP-N-acetyl-alpha-D-glucosamine. Asn228 is a Mg(2+) binding site. A linker region spans residues 231–251 (VALSQAEIYMKQRINKRHMQN). The interval 252–456 (GVSLIDPDNT…EDYAENIHKK (205 aa)) is N-acetyltransferase. Residues Arg333 and Lys351 each contribute to the UDP-N-acetyl-alpha-D-glucosamine site. Residue His363 is the Proton acceptor of the active site. Residues Tyr366 and Asn377 each contribute to the UDP-N-acetyl-alpha-D-glucosamine site. Residues 386–387 (NY), Ala423, and Arg440 each bind acetyl-CoA.

The protein in the N-terminal section; belongs to the N-acetylglucosamine-1-phosphate uridyltransferase family. In the C-terminal section; belongs to the transferase hexapeptide repeat family. Homotrimer. The cofactor is Mg(2+).

It localises to the cytoplasm. It catalyses the reaction alpha-D-glucosamine 1-phosphate + acetyl-CoA = N-acetyl-alpha-D-glucosamine 1-phosphate + CoA + H(+). It carries out the reaction N-acetyl-alpha-D-glucosamine 1-phosphate + UTP + H(+) = UDP-N-acetyl-alpha-D-glucosamine + diphosphate. Its pathway is nucleotide-sugar biosynthesis; UDP-N-acetyl-alpha-D-glucosamine biosynthesis; N-acetyl-alpha-D-glucosamine 1-phosphate from alpha-D-glucosamine 6-phosphate (route II): step 2/2. It functions in the pathway nucleotide-sugar biosynthesis; UDP-N-acetyl-alpha-D-glucosamine biosynthesis; UDP-N-acetyl-alpha-D-glucosamine from N-acetyl-alpha-D-glucosamine 1-phosphate: step 1/1. It participates in bacterial outer membrane biogenesis; LPS lipid A biosynthesis. Catalyzes the last two sequential reactions in the de novo biosynthetic pathway for UDP-N-acetylglucosamine (UDP-GlcNAc). The C-terminal domain catalyzes the transfer of acetyl group from acetyl coenzyme A to glucosamine-1-phosphate (GlcN-1-P) to produce N-acetylglucosamine-1-phosphate (GlcNAc-1-P), which is converted into UDP-GlcNAc by the transfer of uridine 5-monophosphate (from uridine 5-triphosphate), a reaction catalyzed by the N-terminal domain. The chain is Bifunctional protein GlmU from Bacillus licheniformis (strain ATCC 14580 / DSM 13 / JCM 2505 / CCUG 7422 / NBRC 12200 / NCIMB 9375 / NCTC 10341 / NRRL NRS-1264 / Gibson 46).